Consider the following 416-residue polypeptide: Probable pectate lyase 8 (416 aa).

The N-terminal stretch at 1–24 is a signal peptide; that stretch reads MAVTKLILFASALLLTALFIGVNA. N-linked (GlcNAc...) asparagine glycosylation is found at Asn23, Asn28, and Asn52. Ca(2+) is bound by residues Asp214, Asp238, and Asp242. Residue Arg294 is part of the active site.

The protein belongs to the polysaccharide lyase 1 family. Ca(2+) is required as a cofactor.

It carries out the reaction Eliminative cleavage of (1-&gt;4)-alpha-D-galacturonan to give oligosaccharides with 4-deoxy-alpha-D-galact-4-enuronosyl groups at their non-reducing ends.. It functions in the pathway glycan metabolism; pectin degradation; 2-dehydro-3-deoxy-D-gluconate from pectin: step 2/5. This chain is Probable pectate lyase 8, found in Arabidopsis thaliana (Mouse-ear cress).